Consider the following 495-residue polypeptide: Cytochrome P450 monooxygenase BOA4 (495 aa).

A helical transmembrane segment spans residues 12–31; that stretch reads LANSNTVIAGCIVFALYYLF. An N-linked (GlcNAc...) asparagine glycan is attached at Asn115. Cys439 is a heme binding site.

Belongs to the cytochrome P450 family. It depends on heme as a cofactor.

The protein localises to the membrane. It participates in polyketide biosynthesis. In terms of biological role, cytochrome P450 monooxygenase; part of the gene cluster A that mediates the biosynthesis of botcinic acid and its botcinin derivatives, acetate-derived polyketides that contribute to virulence when combined with the sesquiterpene botrydial. Botcinic acid and its derivatives have been shown to induce chlorosis and necrosis during host plant infection, but also have antifungal activities. Two polyketide synthases, BOA6 and BOA9, are involved in the biosynthesis of botcinins. BOA6 mediates the formation of the per-methylated tetraketide core by condensation of four units of malonyl-CoA with one unit of acetyl-CoA, which would be methylated in activated methylene groups to yield a bicyclic acid intermediate that could then either be converted to botrylactone derivatives or lose the starter acetate unit through a retro-Claisen type C-C bond cleavage to yield botcinin derivatives. The second polyketide synthase, BOA9, is probably required for the biosynthesis of the tetraketide side chain of botcinins. The methyltransferase (MT) domain within BOA6 is probably responsible for the incorporation of four methyl groups. The trans-enoyl reductase BOA5 might take over the enoyl reductase function of BOA6 that misses an ER domain. The monooxygenases BOA2, BOA3 and BOA4 might be involved in further hydroxylations at C4, C5 and C8, whereas BOA7, close to BOA9, could potentially be involved in the hydroxylation at C4 in the side chain of botcinins. The polypeptide is Cytochrome P450 monooxygenase BOA4 (Botryotinia fuckeliana (strain B05.10) (Noble rot fungus)).